Reading from the N-terminus, the 446-residue chain is Chromosomal replication initiator protein DnaA (446 aa).

The interval Met1–Pro81 is domain I, interacts with DnaA modulators. A domain II region spans residues Pro81–Ser109. Residues Met110 to Ser326 are domain III, AAA+ region. Gly154, Gly156, Lys157, and Thr158 together coordinate ATP. A domain IV, binds dsDNA region spans residues Ser327–Lys446.

The protein belongs to the DnaA family. As to quaternary structure, oligomerizes as a right-handed, spiral filament on DNA at oriC.

The protein resides in the cytoplasm. In terms of biological role, plays an essential role in the initiation and regulation of chromosomal replication. ATP-DnaA binds to the origin of replication (oriC) to initiate formation of the DNA replication initiation complex once per cell cycle. Binds the DnaA box (a 9 base pair repeat at the origin) and separates the double-stranded (ds)DNA. Forms a right-handed helical filament on oriC DNA; dsDNA binds to the exterior of the filament while single-stranded (ss)DNA is stabiized in the filament's interior. The ATP-DnaA-oriC complex binds and stabilizes one strand of the AT-rich DNA unwinding element (DUE), permitting loading of DNA polymerase. After initiation quickly degrades to an ADP-DnaA complex that is not apt for DNA replication. Binds acidic phospholipids. This Bacillus cereus (strain G9842) protein is Chromosomal replication initiator protein DnaA.